The following is a 79-amino-acid chain: Conotoxin Vi6.4 (79 aa).

The N-terminal stretch at 1–22 (MKLTCVLIITVLFLTASQLITA) is a signal peptide. Positions 23 to 47 (DYSGDKRQYRAVRLRDEMRNFKGAR) are excised as a propeptide. 3 disulfide bridges follow: Cys49/Cys62, Cys56/Cys67, and Cys61/Cys77. Pro60 and Pro63 each carry 4-hydroxyproline.

Belongs to the conotoxin O1 superfamily. In terms of tissue distribution, expressed by the venom duct.

It localises to the secreted. In terms of biological role, ion channel inhibitor that inhibits the increase in intracellular calcium upon depolarization in DRG neurons. In vivo, both intraperitoneal and intracranial injections into mice induce hyperactivity. This Conus virgo (Virgin cone) protein is Conotoxin Vi6.4.